The sequence spans 310 residues: Olfactory receptor 8B8 (310 aa).

The Extracellular portion of the chain corresponds to 1–27 (MATENASVPEFILAGLTDQPGLRMPLF). The N-linked (GlcNAc...) asparagine glycan is linked to Asn-5. A helical membrane pass occupies residues 28–48 (FLFLGFYMVTMVGNLGLITLI). Over 49–55 (GLNSHLH) the chain is Cytoplasmic. Residues 56 to 76 (TPMYFFLFNLSLIDFCYSTVI) traverse the membrane as a helical segment. Residues 77-98 (TPKMLVSFVSKKNIISYSGCMT) lie on the Extracellular side of the membrane. Cys-96 and Cys-188 are oxidised to a cystine. A helical transmembrane segment spans residues 99-119 (QLFFFLFFVVSESFILSAMAY). The Cytoplasmic portion of the chain corresponds to 120-140 (DRYVAICNPLMYTVTMSPQVC). The chain crosses the membrane as a helical span at residues 141 to 161 (LLLLLGVYVMGFAGAMAHTAF). The Extracellular portion of the chain corresponds to 162 to 195 (MVKLTFCADKLVNHYMCDILPLLERSCTSTYVNE). A helical transmembrane segment spans residues 196–216 (LVVFIVVGIDIGVPTVTIFIS). Residues 217–238 (YALILSSILRISSTEGRSKAFS) are Cytoplasmic-facing. The helical transmembrane segment at 239–259 (TCSSHIIAVSLFFGSGAFMYL) threads the bilayer. Residues 260-270 (KPSSLLPMNQG) lie on the Extracellular side of the membrane. The helical transmembrane segment at 271-291 (KVSSLFYTIVVPMLNPLIYSL) threads the bilayer. Residues 292–310 (RNKDVKVALRKTLSRSSFS) lie on the Cytoplasmic side of the membrane.

It belongs to the G-protein coupled receptor 1 family.

The protein localises to the cell membrane. In terms of biological role, odorant receptor. In Mus musculus (Mouse), this protein is Olfactory receptor 8B8.